The primary structure comprises 578 residues: Isocitrate dehydrogenase kinase/phosphatase (578 aa).

ATP is bound by residues 315–321 (APGIRGM) and Lys336. The active site involves Asp371.

It belongs to the AceK family.

It is found in the cytoplasm. It carries out the reaction L-seryl-[isocitrate dehydrogenase] + ATP = O-phospho-L-seryl-[isocitrate dehydrogenase] + ADP + H(+). In terms of biological role, bifunctional enzyme which can phosphorylate or dephosphorylate isocitrate dehydrogenase (IDH) on a specific serine residue. This is a regulatory mechanism which enables bacteria to bypass the Krebs cycle via the glyoxylate shunt in response to the source of carbon. When bacteria are grown on glucose, IDH is fully active and unphosphorylated, but when grown on acetate or ethanol, the activity of IDH declines drastically concomitant with its phosphorylation. In Escherichia coli (strain ATCC 8739 / DSM 1576 / NBRC 3972 / NCIMB 8545 / WDCM 00012 / Crooks), this protein is Isocitrate dehydrogenase kinase/phosphatase.